The following is a 44-amino-acid chain: Protein PsbN (44 aa).

A helical transmembrane segment spans residues 6 to 26 (FFFTIFVWFLLISVTGYSIYV).

The protein belongs to the PsbN family.

The protein resides in the plastid. It is found in the chloroplast thylakoid membrane. In terms of biological role, may play a role in photosystem I and II biogenesis. The protein is Protein PsbN of Bigelowiella natans (Pedinomonas minutissima).